Reading from the N-terminus, the 512-residue chain is Lysine--tRNA ligase (512 aa).

Residues Glu408 and Glu415 each coordinate Mg(2+).

This sequence belongs to the class-II aminoacyl-tRNA synthetase family. In terms of assembly, homodimer. Requires Mg(2+) as cofactor.

The protein resides in the cytoplasm. It catalyses the reaction tRNA(Lys) + L-lysine + ATP = L-lysyl-tRNA(Lys) + AMP + diphosphate. The polypeptide is Lysine--tRNA ligase (Prochlorococcus marinus (strain MIT 9312)).